The following is a 212-amino-acid chain: Mediator of RNA polymerase II transcription subunit 20 (212 aa).

Belongs to the Mediator complex subunit 20 family. As to quaternary structure, component of the Mediator complex, which is composed of MED1, MED4, MED6, MED7, MED8, MED9, MED10, MED11, MED12, MED13, MED13L, MED14, MED15, MED16, MED17, MED18, MED19, MED20, MED21, MED22, MED23, MED24, MED25, MED26, MED27, MED29, MED30, MED31, CCNC, CDK8 and CDC2L6/CDK11. The MED12, MED13, CCNC and CDK8 subunits form a distinct module termed the CDK8 module. Mediator containing the CDK8 module is less active than Mediator lacking this module in supporting transcriptional activation. Individual preparations of the Mediator complex lacking one or more distinct subunits have been variously termed ARC, CRSP, DRIP, PC2, SMCC and TRAP. Interacts with PPARG.

Its subcellular location is the nucleus. Functionally, component of the Mediator complex, a coactivator involved in the regulated transcription of nearly all RNA polymerase II-dependent genes. Mediator functions as a bridge to convey information from gene-specific regulatory proteins to the basal RNA polymerase II transcription machinery. Mediator is recruited to promoters by direct interactions with regulatory proteins and serves as a scaffold for the assembly of a functional preinitiation complex with RNA polymerase II and the general transcription factors. The polypeptide is Mediator of RNA polymerase II transcription subunit 20 (MED20) (Macaca fascicularis (Crab-eating macaque)).